An 876-amino-acid chain; its full sequence is MNEKYAALKSNVSMLGRLLGNTIQDAHGDVILEKVETIRKLSKSARAGNKADRDSLVEEIKNLPNEQLTPVARAFNQFLNLTNMAEQYHTISRHCEEHVCEPDVLQSLFSKLNQNDISKLDAAQAVRDLNIELVLTAHPTEITRRTMINKLVKINECLSKLELSDLSHKERAKTERRLEQLIAQGWHSDVIRQQRPTPLDEAKWGFAVVENSLWEAVPDFLREMDGRLKGYLGEGLPIDARPVHFSSWMGGDRDGNPFVTHTITKEVLRLSRWKAADLYLGDVNELITELSMTKCNDAVRELAGDEHEAYRAILKSLRTLLNNTLEVLDAKLHDAEVPKKETLQNIDQLWTPLYACYQSLHECGMGVIADGSLLDTLRRLKAFGVHLVRLDVRQESTRHSDVLSELTRYLGIGDYDQWSEQDKVAFLTNELSSKRPLLPRDWEPSEQVKEVLDTCKVVAAQPREAFGAYVISMARTASDVLAVHLLLQECGCPYRMDVCPLFETLDDLNNSEAVMKQLMSIDLYRGFIQNHQMVMIGYSDSAKDAGVMSAGWAQYDAMDKLVKACEEEGIELTLFHGRGGTVGRGGAPAHAALLSQPPKSLKGGLRVTEQGEMIRFKLGLPDVAVNSFNLYASAILEANLLPPPEPKQEWRDLMEVLSEVSCEAYRNVVRGEEKFVPYFRQATPELELGKLPLGSRPAKRNPNGGVESLRAIPWIFSWSQNRLVLPAWLGAGEAIQYSVDQGHQALLEEMCREWPFFSTRLGMLEMVYSKCNMEIAKYYDQRLVDEELLPLGELLREQLQKDIKAVLNVENNENLMQSDPWGLESIRLRNIYVEPLNMLQAELLYRTRKCETPPAELEEALMVTIAGIAAGMRNTG.

Active-site residues include H138 and K543.

This sequence belongs to the PEPCase type 1 family. Mg(2+) is required as a cofactor.

It catalyses the reaction oxaloacetate + phosphate = phosphoenolpyruvate + hydrogencarbonate. Forms oxaloacetate, a four-carbon dicarboxylic acid source for the tricarboxylic acid cycle. This chain is Phosphoenolpyruvate carboxylase, found in Vibrio atlanticus (strain LGP32) (Vibrio splendidus (strain Mel32)).